A 315-amino-acid polypeptide reads, in one-letter code: Ribose-phosphate pyrophosphokinase (315 aa).

Residues 37 to 39 (DSE) and 96 to 97 (RQ) contribute to the ATP site. 2 residues coordinate Mg(2+): His131 and Asp170. The active site involves Lys194. D-ribose 5-phosphate-binding positions include Arg196, Asp220, and 224-228 (DTGGT).

Belongs to the ribose-phosphate pyrophosphokinase family. Class I subfamily. In terms of assembly, homohexamer. Requires Mg(2+) as cofactor.

Its subcellular location is the cytoplasm. The enzyme catalyses D-ribose 5-phosphate + ATP = 5-phospho-alpha-D-ribose 1-diphosphate + AMP + H(+). Its pathway is metabolic intermediate biosynthesis; 5-phospho-alpha-D-ribose 1-diphosphate biosynthesis; 5-phospho-alpha-D-ribose 1-diphosphate from D-ribose 5-phosphate (route I): step 1/1. Its function is as follows. Involved in the biosynthesis of the central metabolite phospho-alpha-D-ribosyl-1-pyrophosphate (PRPP) via the transfer of pyrophosphoryl group from ATP to 1-hydroxyl of ribose-5-phosphate (Rib-5-P). This is Ribose-phosphate pyrophosphokinase from Marinomonas sp. (strain MWYL1).